The sequence spans 375 residues: Growth/differentiation factor 8 (375 aa).

The first 18 residues, 1-18 (MQKLQIFVYIYLFMLLVA), serve as a signal peptide directing secretion. Residues 19-266 (GPVDLNENSE…VTDTPKRSRR (248 aa)) constitute a propeptide that is removed on maturation. Asn48 and Asn71 each carry an N-linked (GlcNAc...) asparagine glycan. Disulfide bonds link Cys272–Cys282, Cys281–Cys340, Cys309–Cys372, and Cys313–Cys374.

This sequence belongs to the TGF-beta family. As to quaternary structure, homodimer; disulfide-linked. Interacts with WFIKKN2, leading to inhibit its activity. Interacts with FSTL3. Synthesized as large precursor molecule that undergoes proteolytic cleavage to generate an N-terminal propeptide and a disulfide linked C-terminal dimer, which is the biologically active molecule. The circulating form consists of a latent complex of the C-terminal dimer and other proteins, including its propeptide, which maintain the C-terminal dimer in a latent, inactive state. Ligand activation requires additional cleavage of the prodomain by a tolloid-like metalloproteinase.

Its subcellular location is the secreted. Acts specifically as a negative regulator of skeletal muscle growth. The protein is Growth/differentiation factor 8 (MSTN) of Capra ibex (Ibex).